The chain runs to 778 residues: Preasperterpenoid A synthase PvPS (778 aa).

The terpene cyclase stretch occupies residues 1–414; that stretch reads MAATKKSTAT…HRYNFHKPAA (414 aa). Mg(2+) contacts are provided by Asp-176 and Asp-180. Asp-176 contributes to the substrate binding site. A DDXXD 1 motif is present at residues 176–180; it reads DDILD. Substrate contacts are provided by residues 266 to 269, Asn-310, 314 to 318, and 406 to 407; these read RVIN, SWEKE, and RY. The NSE/DTE signature appears at 310–318; it reads NDYFSWEKE. The segment covering 414–431 has biased composition (basic and acidic residues); that stretch reads AKENEDTDDEGAKSDDSK. Residues 415 to 778 are prenyltransferase; it reads KENEDTDDEG…LRLLLKRLQV (364 aa). The interval 416–454 is disordered; it reads ENEDTDDEGAKSDDSKTTLNDSTDSTVVDVKTPATSGLL. Isopentenyl diphosphate contacts are provided by Lys-499, Arg-502, and His-531. Positions 538 and 542 each coordinate Mg(2+). Positions 538-542 match the DDXXD 2 motif; that stretch reads DDIED. Arg-547 serves as a coordination point for dimethylallyl diphosphate. Arg-548 provides a ligand contact to isopentenyl diphosphate. The dimethylallyl diphosphate site is built by Lys-625, Thr-626, Gln-662, Asn-669, Lys-679, and Lys-689.

It in the N-terminal section; belongs to the terpene synthase family. The protein in the C-terminal section; belongs to the FPP/GGPP synthase family. In terms of assembly, hexamer. Mg(2+) serves as cofactor.

It carries out the reaction isopentenyl diphosphate + (2E,6E)-farnesyl diphosphate = (2E,6E,10E)-geranylgeranyl diphosphate + diphosphate. It catalyses the reaction isopentenyl diphosphate + (2E,6E,10E)-geranylgeranyl diphosphate = (2E,6E,10E,14E)-geranylfarnesyl diphosphate + diphosphate. The catalysed reaction is (2E,6E,10E,14E)-geranylfarnesyl diphosphate = preasperterpenoid A + diphosphate. It functions in the pathway secondary metabolite biosynthesis; terpenoid biosynthesis. In terms of biological role, bifunctional sesterterpene synthase that possesses both prenyl transferase and terpene cyclase activity, converting isopentenyl diphosphate and dimethylallyl diphosphate into geranylfarnesyl diphosphate (GFPP) and further converting GFPP into preasperterpenoid A. In Talaromyces verruculosus (Penicillium verruculosum), this protein is Preasperterpenoid A synthase PvPS.